The sequence spans 344 residues: UDP-N-acetylenolpyruvoylglucosamine reductase (344 aa).

Residues 19–189 (INVTAKKIIF…IAVGIKIKKN (171 aa)) enclose the FAD-binding PCMH-type domain. Arg-165 is a catalytic residue. Ser-235 serves as the catalytic Proton donor. Glu-331 is a catalytic residue.

This sequence belongs to the MurB family. It depends on FAD as a cofactor.

The protein resides in the cytoplasm. The enzyme catalyses UDP-N-acetyl-alpha-D-muramate + NADP(+) = UDP-N-acetyl-3-O-(1-carboxyvinyl)-alpha-D-glucosamine + NADPH + H(+). It participates in cell wall biogenesis; peptidoglycan biosynthesis. In terms of biological role, cell wall formation. The polypeptide is UDP-N-acetylenolpyruvoylglucosamine reductase (Buchnera aphidicola subsp. Schizaphis graminum (strain Sg)).